The chain runs to 243 residues: 23S rRNA (guanosine-2'-O-)-methyltransferase RlmB (243 aa).

S-adenosyl-L-methionine-binding residues include G196, I216, and L225.

Belongs to the class IV-like SAM-binding methyltransferase superfamily. RNA methyltransferase TrmH family. RlmB subfamily. In terms of assembly, homodimer.

It is found in the cytoplasm. It carries out the reaction guanosine(2251) in 23S rRNA + S-adenosyl-L-methionine = 2'-O-methylguanosine(2251) in 23S rRNA + S-adenosyl-L-homocysteine + H(+). In terms of biological role, specifically methylates the ribose of guanosine 2251 in 23S rRNA. This is 23S rRNA (guanosine-2'-O-)-methyltransferase RlmB from Shigella flexneri.